Consider the following 323-residue polypeptide: V-type ATP synthase subunit C (323 aa).

It belongs to the V-ATPase V0D/AC39 subunit family.

Its function is as follows. Produces ATP from ADP in the presence of a proton gradient across the membrane. This chain is V-type ATP synthase subunit C, found in Thermus thermophilus (strain ATCC BAA-163 / DSM 7039 / HB27).